Here is a 391-residue protein sequence, read N- to C-terminus: Ferrochelatase (391 aa).

Residues histidine 196 and glutamate 281 each contribute to the Fe cation site.

This sequence belongs to the ferrochelatase family.

It localises to the cytoplasm. It carries out the reaction heme b + 2 H(+) = protoporphyrin IX + Fe(2+). It functions in the pathway porphyrin-containing compound metabolism; protoheme biosynthesis; protoheme from protoporphyrin-IX: step 1/1. Its function is as follows. Catalyzes the ferrous insertion into protoporphyrin IX. The polypeptide is Ferrochelatase (Synechococcus sp. (strain CC9311)).